Reading from the N-terminus, the 141-residue chain is Nucleoside diphosphate kinase (141 aa).

Residues Lys11, Phe59, Arg87, Thr93, Arg104, and Asn114 each coordinate ATP. His117 serves as the catalytic Pros-phosphohistidine intermediate.

The protein belongs to the NDK family. Homotetramer. The cofactor is Mg(2+).

It localises to the cytoplasm. It catalyses the reaction a 2'-deoxyribonucleoside 5'-diphosphate + ATP = a 2'-deoxyribonucleoside 5'-triphosphate + ADP. The enzyme catalyses a ribonucleoside 5'-diphosphate + ATP = a ribonucleoside 5'-triphosphate + ADP. Its function is as follows. Major role in the synthesis of nucleoside triphosphates other than ATP. The ATP gamma phosphate is transferred to the NDP beta phosphate via a ping-pong mechanism, using a phosphorylated active-site intermediate. In Acidovorax sp. (strain JS42), this protein is Nucleoside diphosphate kinase.